The following is a 248-amino-acid chain: uncharacterized protein (248 aa).

NADP(+) is bound at residue 8–32 (IVTGAAQGIGQAYAQALAREGASVV). Substrate is bound at residue serine 143. The active-site Proton acceptor is the tyrosine 153.

This sequence belongs to the short-chain dehydrogenases/reductases (SDR) family.

This is an uncharacterized protein from Mycobacterium tuberculosis (strain CDC 1551 / Oshkosh).